We begin with the raw amino-acid sequence, 203 residues long: Putative 3-methyladenine DNA glycosylase (203 aa).

Belongs to the DNA glycosylase MPG family.

This is Putative 3-methyladenine DNA glycosylase from Desulfitobacterium hafniense (strain Y51).